A 336-amino-acid polypeptide reads, in one-letter code: uncharacterized protein (336 aa).

The first 33 residues, 1-33 (MGSAWPAEIRKIAKISKRLLGATVILGFGVAEA), serve as a signal peptide directing secretion.

This is an uncharacterized protein from Sinorhizobium fredii (strain NBRC 101917 / NGR234).